Consider the following 122-residue polypeptide: Large ribosomal subunit protein uL14 (122 aa).

Belongs to the universal ribosomal protein uL14 family. As to quaternary structure, part of the 50S ribosomal subunit. Forms a cluster with proteins L3 and L19. In the 70S ribosome, L14 and L19 interact and together make contacts with the 16S rRNA in bridges B5 and B8.

Its function is as follows. Binds to 23S rRNA. Forms part of two intersubunit bridges in the 70S ribosome. The chain is Large ribosomal subunit protein uL14 from Micrococcus luteus (strain ATCC 4698 / DSM 20030 / JCM 1464 / CCM 169 / CCUG 5858 / IAM 1056 / NBRC 3333 / NCIMB 9278 / NCTC 2665 / VKM Ac-2230) (Micrococcus lysodeikticus).